Consider the following 587-residue polypeptide: RuBisCO large subunit-binding protein subunit alpha, chloroplastic (587 aa).

A compositionally biased stretch (polar residues) spans 1–25 (MASTNALSSTSILRSPTNQAQTSLS). The tract at residues 1–33 (MASTNALSSTSILRSPTNQAQTSLSKKVKQHGR) is disordered. Residues 1–47 (MASTNALSSTSILRSPTNQAQTSLSKKVKQHGRVNFRQKPNRFVVKA) constitute a chloroplast transit peptide.

This sequence belongs to the chaperonin (HSP60) family. Oligomer of probably six alpha and six beta subunits.

The protein localises to the plastid. The protein resides in the chloroplast. In terms of biological role, this protein binds RuBisCO small and large subunits and is implicated in the assembly of the enzyme oligomer. The sequence is that of RuBisCO large subunit-binding protein subunit alpha, chloroplastic from Pisum sativum (Garden pea).